Consider the following 424-residue polypeptide: Enolase (424 aa).

Gln-162 provides a ligand contact to (2R)-2-phosphoglycerate. Catalysis depends on Glu-204, which acts as the Proton donor. Mg(2+) is bound by residues Asp-241, Glu-284, and Asp-311. (2R)-2-phosphoglycerate-binding residues include Lys-336, Arg-365, Ser-366, and Lys-387. Lys-336 acts as the Proton acceptor in catalysis.

It belongs to the enolase family. Mg(2+) is required as a cofactor.

It localises to the cytoplasm. It is found in the secreted. The protein localises to the cell surface. It catalyses the reaction (2R)-2-phosphoglycerate = phosphoenolpyruvate + H2O. Its pathway is carbohydrate degradation; glycolysis; pyruvate from D-glyceraldehyde 3-phosphate: step 4/5. Its function is as follows. Catalyzes the reversible conversion of 2-phosphoglycerate (2-PG) into phosphoenolpyruvate (PEP). It is essential for the degradation of carbohydrates via glycolysis. In Parvibaculum lavamentivorans (strain DS-1 / DSM 13023 / NCIMB 13966), this protein is Enolase.